We begin with the raw amino-acid sequence, 542 residues long: LysM domain-containing protein ARB_00327 (542 aa).

A signal peptide spans 1-35 (MLSSVLFPAMRTLLLLKYVFSLISLSAICCQTVSA). 4 N-linked (GlcNAc...) asparagine glycosylation sites follow: Asn218, Asn298, Asn381, and Asn415. One can recognise a LysM 1 domain in the interval 264–310 (RWYGVKKGDYCNLIVLKFGITMDNFIFLNPALNSNCTNLYAEESYCV). The segment at 439-484 (DSDEPTPTTPITTSDDPTSTSATPTTPTTSSKPSPGAPTMTGQPSA) is disordered. Residues 443-472 (PTPTTPITTSDDPTSTSATPTTPTTSSKPS) show a composition bias toward low complexity. One can recognise a LysM 2 domain in the interval 487-534 (KWHTVTNGESCTVIPKTFGITLEQFLAWNPTVKSDCTENFWAGYAYCV).

Its subcellular location is the secreted. Its function is as follows. Might have a role in sequestration of chitin oligosaccharides (breakdown products of fungal cell walls that are released during invasion and act as triggers of host immunity) to dampen host defense. The sequence is that of LysM domain-containing protein ARB_00327 from Arthroderma benhamiae (strain ATCC MYA-4681 / CBS 112371) (Trichophyton mentagrophytes).